Here is a 346-residue protein sequence, read N- to C-terminus: Tryptophan--tRNA ligase (346 aa).

ATP-binding positions include 11 to 13 and 19 to 20; these read RPT and GH. The 'HIGH' region motif lies at 12-20; that stretch reads PTGKLHLGH. Asp-143 contacts L-tryptophan. ATP contacts are provided by residues 155–157, Leu-193, and 201–205; these read GKD and KMSKS. Positions 201-205 match the 'KMSKS' region motif; the sequence is KMSKS.

This sequence belongs to the class-I aminoacyl-tRNA synthetase family. As to quaternary structure, homodimer.

The protein localises to the cytoplasm. The enzyme catalyses tRNA(Trp) + L-tryptophan + ATP = L-tryptophyl-tRNA(Trp) + AMP + diphosphate + H(+). Its function is as follows. Catalyzes the attachment of tryptophan to tRNA(Trp). The protein is Tryptophan--tRNA ligase of Chlamydia muridarum (strain MoPn / Nigg).